The chain runs to 257 residues: MQYQVDLNSDIGESYGAYTIGQDDEVMEFITSANIACGYHAGDHNIIHRTIDLAIKNNVAIGAHPGLQDLIGFGRRPMQISPEEVYQLTVYQIGAVQAFAQVKGHNLYHVKPHGALYNMAAKDTAIAKAIAQAVYDYNPNLILFGLANSELIRMGKEVGLNVANEVFADRTYQPDGSLTPRTSPNAMIHDTDEAVERVIRMVKENKIEAVDGTDISIIADTICIHGDGPKSLEFSRRLSHELKNQGISIQKREMHHG.

This sequence belongs to the LamB/PxpA family. As to quaternary structure, forms a complex composed of PxpA, PxpB and PxpC.

The catalysed reaction is 5-oxo-L-proline + ATP + 2 H2O = L-glutamate + ADP + phosphate + H(+). In terms of biological role, catalyzes the cleavage of 5-oxoproline to form L-glutamate coupled to the hydrolysis of ATP to ADP and inorganic phosphate. The sequence is that of 5-oxoprolinase subunit A from Oceanobacillus iheyensis (strain DSM 14371 / CIP 107618 / JCM 11309 / KCTC 3954 / HTE831).